The following is a 202-amino-acid chain: Small ribosomal subunit protein uS4c (202 aa).

Residues 89–152 (MRLDNIIFRL…QSNTFINNCI (64 aa)) form the S4 RNA-binding domain.

Belongs to the universal ribosomal protein uS4 family. Part of the 30S ribosomal subunit. Contacts protein S5. The interaction surface between S4 and S5 is involved in control of translational fidelity.

It localises to the plastid. Its function is as follows. One of the primary rRNA binding proteins, it binds directly to 16S rRNA where it nucleates assembly of the body of the 30S subunit. Functionally, with S5 and S12 plays an important role in translational accuracy. The sequence is that of Small ribosomal subunit protein uS4c (rps4) from Epifagus virginiana (Beechdrops).